The sequence spans 204 residues: Ribonuclease HII (204 aa).

The 190-residue stretch at 14–203 folds into the RNase H type-2 domain; it reads VGLCGVDEAG…VRLLLDQTSL (190 aa). A divalent metal cation contacts are provided by aspartate 20, glutamate 21, and aspartate 112.

Belongs to the RNase HII family. The cofactor is Mn(2+). Mg(2+) serves as cofactor.

The protein resides in the cytoplasm. The enzyme catalyses Endonucleolytic cleavage to 5'-phosphomonoester.. Functionally, endonuclease that specifically degrades the RNA of RNA-DNA hybrids. The chain is Ribonuclease HII from Thiobacillus denitrificans (strain ATCC 25259 / T1).